The sequence spans 386 residues: MEDEMPKTLYVGNLSRDVTEALILQLFSQIGPCKNCKMIMDTAGNDPYCFVEFHEHRHAAAALAAMNGRKIMGKEVKVNWATTPSSQKKDTSSSTVVSTQRSQDHFHVFVGDLSPEITTEDIKAAFAPFGRISDARVVKDMATGKSKGYGFVSFFNKWDAENAIQQMGGQWLGGRQIRTNWATRKPPAPKSTYESNTKQLSYDEVVNQSSPSNCTVYCGGVTSGLTEQLMRQTFSPFGQIMEIRVFPDKGYSFVRFNSHESAAHAIVSVNGTTIEGHVVKCYWGKETLDMINPVQQQNQIGYPQPYGQWGQWYGNAQQIGQYMPNGWQVPAYGMYGQAWNQQGFNQTQSSAPWMGPNYGVQPPQGQNGSMLPNQPSGYRVAGYETQ.

Met-1 bears the N-acetylmethionine mark. RRM domains are found at residues 7–83, 106–184, and 214–286; these read KTLY…WATT, FHVF…WATR, and CTVY…WGKE. Positions 354-386 are disordered; the sequence is MGPNYGVQPPQGQNGSMLPNQPSGYRVAGYETQ. Positions 363–376 are enriched in polar residues; the sequence is PQGQNGSMLPNQPS.

Homooligomer; homooligomerization is induced by Zn(2+). Interacts with FASTK; the interactions leads to its phosphorylation. Interacts (via RRM1 and the C-terminal glutamine-rich (Q) sequence) with SNRPC/U1-C (via N-terminus); thereby facilitating spliceosomal U1 snRNP recruitment to 5' splice sites. Post-translationally, phosphorylated by FASTK; phosphorylation occurs after FAS ligation in FAS-mediated apoptosis and before DNA fragmentation. Expressed in heart, small intestine, kidney, liver, lung, skeletal muscle, testes, pancreas, and ovary (at protein level).

The protein localises to the nucleus. The protein resides in the cytoplasm. It localises to the stress granule. Its function is as follows. RNA-binding protein involved in the regulation of alternative pre-RNA splicing and mRNA translation by binding to uridine-rich (U-rich) RNA sequences. Binds to U-rich sequences immediately downstream from a 5' splice sites in a uridine-rich small nuclear ribonucleoprotein (U snRNP)-dependent fashion, thereby modulating alternative pre-RNA splicing. Preferably binds to the U-rich IAS1 sequence in a U1 snRNP-dependent manner; this binding is optimal if a 5' splice site is adjacent to IAS1. Activates the use of heterologous 5' splice sites; the activation depends on the intron sequence downstream from the 5' splice site, with a preference for a downstream U-rich sequence. By interacting with SNRPC/U1-C, promotes recruitment and binding of spliceosomal U1 snRNP to 5' splice sites followed by U-rich sequences, thereby facilitating atypical 5' splice site recognition by U1 snRNP. Activates splicing of alternative exons with weak 5' splice sites followed by a U-rich stretch on its own pre-mRNA and on TIAR mRNA. Acts as a modulator of alternative splicing for the apoptotic FAS receptor, thereby promoting apoptosis. Binds to the 5' splice site region of FAS intron 5 to promote accumulation of transcripts that include exon 6 at the expense of transcripts in which exon 6 is skipped, thereby leading to the transcription of a membrane-bound apoptotic FAS receptor, which promotes apoptosis. Binds to a conserved AU-rich cis element in COL2A1 intron 2 and modulates alternative splicing of COL2A1 exon 2. Also binds to the equivalent AT-rich element in COL2A1 genomic DNA, and may thereby be involved in the regulation of transcription. Binds specifically to a polypyrimidine-rich controlling element (PCE) located between the weak 5' splice site and the intronic splicing silencer of CFTR mRNA to promote exon 9 inclusion, thereby antagonizing PTB1 and its role in exon skipping of CFTR exon 9. Involved in the repression of mRNA translation by binding to AU-rich elements (AREs) located in mRNA 3' untranslated regions (3' UTRs), including target ARE-bearing mRNAs encoding TNF and PTGS2. Also participates in the cellular response to environmental stress, by acting downstream of the stress-induced phosphorylation of EIF2S1/EIF2A to promote the recruitment of untranslated mRNAs to cytoplasmic stress granules (SGs), leading to stress-induced translational arrest. Formation and recruitment to SGs is regulated by Zn(2+). Possesses nucleolytic activity against cytotoxic lymphocyte target cells. Functionally, displays enhanced splicing regulatory activity compared with TIA isoform Long. The chain is Cytotoxic granule associated RNA binding protein TIA1 (TIA1) from Homo sapiens (Human).